A 278-amino-acid polypeptide reads, in one-letter code: Small ribosomal subunit protein uS5 (278 aa).

The tract at residues 1-43 (MADAPAPAGGRGGFRGGFGGRGRGRGRGRGRGRGRGRGAKDGD) is disordered. Residues 9-21 (GGRGGFRGGFGGR) are compositionally biased toward gly residues. Residues 22-37 (GRGRGRGRGRGRGRGR) are compositionally biased toward basic residues. One can recognise an S5 DRBM domain in the interval 88–151 (LKDEVLKIMP…ILAKLSVVPV (64 aa)).

It belongs to the universal ribosomal protein uS5 family.

Functionally, component of the ribosome, a large ribonucleoprotein complex responsible for the synthesis of proteins in the cell. The small ribosomal subunit (SSU) binds messenger RNAs (mRNAs) and translates the encoded message by selecting cognate aminoacyl-transfer RNA (tRNA) molecules. The large subunit (LSU) contains the ribosomal catalytic site termed the peptidyl transferase center (PTC), which catalyzes the formation of peptide bonds, thereby polymerizing the amino acids delivered by tRNAs into a polypeptide chain. The nascent polypeptides leave the ribosome through a tunnel in the LSU and interact with protein factors that function in enzymatic processing, targeting, and the membrane insertion of nascent chains at the exit of the ribosomal tunnel. Plays a role in the assembly and function of the 40S ribosomal subunit. Mutations in this protein affects the control of translational fidelity. Involved in nucleolar processing of pre-18S ribosomal RNA and ribosome assembly. In Urechis caupo (Innkeeper worm), this protein is Small ribosomal subunit protein uS5 (RPS2).